Here is a 357-residue protein sequence, read N- to C-terminus: Elongation factor Ts (357 aa).

The interval 82 to 85 (TDFV) is involved in Mg(2+) ion dislocation from EF-Tu.

It belongs to the EF-Ts family.

The protein resides in the cytoplasm. Its function is as follows. Associates with the EF-Tu.GDP complex and induces the exchange of GDP to GTP. It remains bound to the aminoacyl-tRNA.EF-Tu.GTP complex up to the GTP hydrolysis stage on the ribosome. The sequence is that of Elongation factor Ts from Campylobacter jejuni subsp. doylei (strain ATCC BAA-1458 / RM4099 / 269.97).